The sequence spans 342 residues: Holliday junction branch migration complex subunit RuvB (342 aa).

The segment at 1-179 is large ATPase domain (RuvB-L); that stretch reads MTNILSPEKS…FGIPMRLNFY (179 aa). ATP contacts are provided by residues Ile18, Arg19, Gly60, Lys63, Thr64, Thr65, 126-128, Arg169, Tyr179, and Arg216; that span reads EDF. Thr64 serves as a coordination point for Mg(2+). The small ATPAse domain (RuvB-S) stretch occupies residues 180–250; it reads NTEELKKVLN…ISDFGLKRLE (71 aa). The tract at residues 253 to 342 is head domain (RuvB-H); it reads RIGLDSNDYR…HQFNIFNENE (90 aa). DNA contacts are provided by Arg289, Arg308, and Arg313.

The protein belongs to the RuvB family. In terms of assembly, homohexamer. Forms an RuvA(8)-RuvB(12)-Holliday junction (HJ) complex. HJ DNA is sandwiched between 2 RuvA tetramers; dsDNA enters through RuvA and exits via RuvB. An RuvB hexamer assembles on each DNA strand where it exits the tetramer. Each RuvB hexamer is contacted by two RuvA subunits (via domain III) on 2 adjacent RuvB subunits; this complex drives branch migration. In the full resolvosome a probable DNA-RuvA(4)-RuvB(12)-RuvC(2) complex forms which resolves the HJ.

The protein localises to the cytoplasm. It carries out the reaction ATP + H2O = ADP + phosphate + H(+). Its function is as follows. The RuvA-RuvB-RuvC complex processes Holliday junction (HJ) DNA during genetic recombination and DNA repair, while the RuvA-RuvB complex plays an important role in the rescue of blocked DNA replication forks via replication fork reversal (RFR). RuvA specifically binds to HJ cruciform DNA, conferring on it an open structure. The RuvB hexamer acts as an ATP-dependent pump, pulling dsDNA into and through the RuvAB complex. RuvB forms 2 homohexamers on either side of HJ DNA bound by 1 or 2 RuvA tetramers; 4 subunits per hexamer contact DNA at a time. Coordinated motions by a converter formed by DNA-disengaged RuvB subunits stimulates ATP hydrolysis and nucleotide exchange. Immobilization of the converter enables RuvB to convert the ATP-contained energy into a lever motion, pulling 2 nucleotides of DNA out of the RuvA tetramer per ATP hydrolyzed, thus driving DNA branch migration. The RuvB motors rotate together with the DNA substrate, which together with the progressing nucleotide cycle form the mechanistic basis for DNA recombination by continuous HJ branch migration. Branch migration allows RuvC to scan DNA until it finds its consensus sequence, where it cleaves and resolves cruciform DNA. This chain is Holliday junction branch migration complex subunit RuvB, found in Rickettsia peacockii (strain Rustic).